We begin with the raw amino-acid sequence, 98 residues long: Beta-elicitin DRE-beta (98 aa).

3 disulfide bridges follow: C3–C71, C27–C56, and C51–C95.

The protein belongs to the elicitin family.

The protein resides in the secreted. Induces local and distal defense responses (incompatible hypersensitive reaction) in plants from the solanaceae and cruciferae families. Elicits leaf necrosis and causes the accumulation of pathogenesis-related proteins. Might interact with the lipidic molecules of the plasma membrane. This is Beta-elicitin DRE-beta from Phytophthora drechsleri.